The primary structure comprises 859 residues: Envelope glycoprotein gp160 (859 aa).

An N-terminal signal peptide occupies residues 1–28 (METQRNYPSLWRWGTLILGMLLICSVVG). Residues 29-687 (NLWVTVYYGV…ITNWLWYIRI (659 aa)) lie on the Extracellular side of the membrane. A disulfide bond links cysteine 50 and cysteine 70. Asparagine 84, asparagine 131, asparagine 134, asparagine 139, asparagine 140, asparagine 154, asparagine 158, asparagine 188, asparagine 200, asparagine 237, asparagine 244, asparagine 265, asparagine 280, asparagine 299, asparagine 305, asparagine 335, asparagine 342, and asparagine 358 each carry an N-linked (GlcNAc...) asparagine; by host glycan. 5 disulfide bridges follow: cysteine 115–cysteine 208, cysteine 122–cysteine 199, cysteine 127–cysteine 155, cysteine 221–cysteine 250, and cysteine 231–cysteine 242. The interval 127–154 (CSSVNATNVTKSNNSTDINIGEIQEQRN) is V1. Positions 155–199 (CSFNVTTAIRDKNQKVHALFYRADIVQIDEGERNKSDNHYRLINC) are V2. Positions 300 to 333 (CTRTGNNTRKSIRIGPGQAFYATGDIIGDIRRAY) are V3. Cysteine 300 and cysteine 334 are joined by a disulfide. Residues 366 to 376 (PAGGDIEIITH) are CD4-binding loop. 2 disulfide bridges follow: cysteine 380/cysteine 450 and cysteine 387/cysteine 423. The interval 387–423 (CNTTKLFNSTWTNSSYTNDTYNSNSTEDITGNITLQC) is V4. Asparagine 388, asparagine 394, asparagine 399, asparagine 404, asparagine 410, asparagine 418, asparagine 447, asparagine 453, asparagine 464, and asparagine 468 each carry an N-linked (GlcNAc...) asparagine; by host glycan. The V5 stretch occupies residues 466–474 (TNNVTFRPG). Residues 515–535 (AVGMGAFFLGFLGAAGSTMGA) are fusion peptide. The immunosuppression stretch occupies residues 577 to 595 (KQLQARVLAVERYLKDQQL). Cysteine 601 and cysteine 607 form a disulfide bridge. N-linked (GlcNAc...) asparagine; by host glycans are attached at residues asparagine 614, asparagine 619, asparagine 628, and asparagine 640. Residues 636 to 670 (KQINNYTDEIYRLLEVSQNQQEKNEQDLLALDKWA) adopt a coiled-coil conformation. The tract at residues 665 to 686 (ALDKWANLWNWFSITNWLWYIR) is MPER; binding to GalCer. Residues 688-708 (FIMIVGGIIGLRIVFAVLSIV) traverse the membrane as a helical segment. The Cytoplasmic portion of the chain corresponds to 709–859 (NRVRQGYSPL…IRQGFERALL (151 aa)). The YXXL motif; contains endocytosis signal signature appears at 715–718 (YSPL). The segment at 724 to 743 (IPNQRGPDRPREIEEEGGEQ) is disordered. Cysteine 767 carries S-palmitoyl cysteine; by host lipidation. Residues 858–859 (LL) carry the Di-leucine internalization motif motif.

The protein belongs to the HIV-1 env protein family. The mature envelope protein (Env) consists of a homotrimer of non-covalently associated gp120-gp41 heterodimers. The resulting complex protrudes from the virus surface as a spike. There seems to be as few as 10 spikes on the average virion. Interacts with host CD4, CCR5 and CXCR4. Gp120 also interacts with the C-type lectins CD209/DC-SIGN and CLEC4M/DC-SIGNR (collectively referred to as DC-SIGN(R)). Gp120 and gp41 interact with GalCer. Gp120 interacts with host ITGA4/ITGB7 complex; on CD4+ T-cells, this interaction results in rapid activation of integrin ITGAL/LFA-1, which facilitates efficient cell-to-cell spreading of HIV-1. Gp120 interacts with cell-associated heparan sulfate; this interaction increases virus infectivity on permissive cells and may be involved in infection of CD4- cells. As to quaternary structure, the mature envelope protein (Env) consists of a homotrimer of non-covalently associated gp120-gp41 heterodimers. The resulting complex protrudes from the virus surface as a spike. There seems to be as few as 10 spikes on the average virion. In terms of processing, highly glycosylated by host. The high number of glycan on the protein is reffered to as 'glycan shield' because it contributes to hide protein sequence from adaptive immune system. Palmitoylation of the transmembrane protein and of Env polyprotein (prior to its proteolytic cleavage) is essential for their association with host cell membrane lipid rafts. Palmitoylation is therefore required for envelope trafficking to classical lipid rafts, but not for viral replication. Post-translationally, specific enzymatic cleavages in vivo yield mature proteins. Envelope glycoproteins are synthesized as an inactive precursor that is heavily N-glycosylated and processed likely by host cell furin in the Golgi to yield the mature SU and TM proteins. The cleavage site between SU and TM requires the minimal sequence [KR]-X-[KR]-R. About 2 of the 9 disulfide bonds of gp41 are reduced by P4HB/PDI, following binding to CD4 receptor.

The protein localises to the virion membrane. It is found in the host cell membrane. It localises to the host endosome membrane. Oligomerizes in the host endoplasmic reticulum into predominantly trimers. In a second time, gp160 transits in the host Golgi, where glycosylation is completed. The precursor is then proteolytically cleaved in the trans-Golgi and thereby activated by cellular furin or furin-like proteases to produce gp120 and gp41. Its function is as follows. Attaches the virus to the host lymphoid cell by binding to the primary receptor CD4. This interaction induces a structural rearrangement creating a high affinity binding site for a chemokine coreceptor like CXCR4 and/or CCR5. Acts as a ligand for CD209/DC-SIGN and CLEC4M/DC-SIGNR, which are respectively found on dendritic cells (DCs), and on endothelial cells of liver sinusoids and lymph node sinuses. These interactions allow capture of viral particles at mucosal surfaces by these cells and subsequent transmission to permissive cells. HIV subverts the migration properties of dendritic cells to gain access to CD4+ T-cells in lymph nodes. Virus transmission to permissive T-cells occurs either in trans (without DCs infection, through viral capture and transmission), or in cis (following DCs productive infection, through the usual CD4-gp120 interaction), thereby inducing a robust infection. In trans infection, bound virions remain infectious over days and it is proposed that they are not degraded, but protected in non-lysosomal acidic organelles within the DCs close to the cell membrane thus contributing to the viral infectious potential during DCs' migration from the periphery to the lymphoid tissues. On arrival at lymphoid tissues, intact virions recycle back to DCs' cell surface allowing virus transmission to CD4+ T-cells. In terms of biological role, acts as a class I viral fusion protein. Under the current model, the protein has at least 3 conformational states: pre-fusion native state, pre-hairpin intermediate state, and post-fusion hairpin state. During fusion of viral and target intracellular membranes, the coiled coil regions (heptad repeats) assume a trimer-of-hairpins structure, positioning the fusion peptide in close proximity to the C-terminal region of the ectodomain. The formation of this structure appears to drive apposition and subsequent fusion of viral and target cell membranes. Complete fusion occurs in host cell endosomes and is dynamin-dependent, however some lipid transfer might occur at the plasma membrane. The virus undergoes clathrin-dependent internalization long before endosomal fusion, thus minimizing the surface exposure of conserved viral epitopes during fusion and reducing the efficacy of inhibitors targeting these epitopes. Membranes fusion leads to delivery of the nucleocapsid into the cytoplasm. This is Envelope glycoprotein gp160 from Human immunodeficiency virus type 1 group M subtype H (isolate VI991) (HIV-1).